The primary structure comprises 188 residues: Dual specificity protein phosphatase 18 (188 aa).

The region spanning 19–160 is the Tyrosine-protein phosphatase domain; it reads GLSQITKSLF…LIHYELQLFG (142 aa). The segment at 95 to 141 is sufficient for mitochondrial localization; it reads MQKGRTLLHCAAGVSRSAALCLAYLMKYHAMSLVDAHTWTKSCRPII. The active-site Phosphocysteine intermediate is the cysteine 104.

Belongs to the protein-tyrosine phosphatase family. Non-receptor class dual specificity subfamily.

It localises to the cytoplasm. The protein localises to the nucleus. It is found in the mitochondrion inner membrane. It catalyses the reaction O-phospho-L-tyrosyl-[protein] + H2O = L-tyrosyl-[protein] + phosphate. It carries out the reaction O-phospho-L-seryl-[protein] + H2O = L-seryl-[protein] + phosphate. The catalysed reaction is O-phospho-L-threonyl-[protein] + H2O = L-threonyl-[protein] + phosphate. In terms of biological role, can dephosphorylate single and diphosphorylated synthetic MAPK peptides, with preference for the phosphotyrosine and diphosphorylated forms over phosphothreonine. In vitro, dephosphorylates p-nitrophenyl phosphate (pNPP). The sequence is that of Dual specificity protein phosphatase 18 (Dusp18) from Mus musculus (Mouse).